The following is a 428-amino-acid chain: Adenylosuccinate synthetase (428 aa).

GTP is bound by residues 12-18 (GDEGKGK) and 40-42 (GHS). The active-site Proton acceptor is Asp13. Mg(2+) is bound by residues Asp13 and Gly40. IMP-binding positions include 13–16 (DEGK), 38–41 (NAGH), Thr128, Arg142, Gln223, Thr238, and Arg302. His41 acts as the Proton donor in catalysis. Residue 298–304 (VTTGRPR) coordinates substrate. GTP-binding positions include Arg304, 330-332 (KLD), and 412-414 (GTG).

It belongs to the adenylosuccinate synthetase family. In terms of assembly, homodimer. Mg(2+) is required as a cofactor.

The protein localises to the cytoplasm. The catalysed reaction is IMP + L-aspartate + GTP = N(6)-(1,2-dicarboxyethyl)-AMP + GDP + phosphate + 2 H(+). Its pathway is purine metabolism; AMP biosynthesis via de novo pathway; AMP from IMP: step 1/2. Its function is as follows. Plays an important role in the de novo pathway of purine nucleotide biosynthesis. Catalyzes the first committed step in the biosynthesis of AMP from IMP. The sequence is that of Adenylosuccinate synthetase from Bifidobacterium longum subsp. infantis (strain ATCC 15697 / DSM 20088 / JCM 1222 / NCTC 11817 / S12).